The chain runs to 692 residues: Elongation factor G (692 aa).

A tr-type G domain is found at 8–283 (NRIRNIGIAA…AVIDYLPAPT (276 aa)). Residues 17–24 (AHIDAGKT), 81–85 (DTPGH), and 135–138 (NKMD) contribute to the GTP site.

Belongs to the TRAFAC class translation factor GTPase superfamily. Classic translation factor GTPase family. EF-G/EF-2 subfamily.

The protein localises to the cytoplasm. In terms of biological role, catalyzes the GTP-dependent ribosomal translocation step during translation elongation. During this step, the ribosome changes from the pre-translocational (PRE) to the post-translocational (POST) state as the newly formed A-site-bound peptidyl-tRNA and P-site-bound deacylated tRNA move to the P and E sites, respectively. Catalyzes the coordinated movement of the two tRNA molecules, the mRNA and conformational changes in the ribosome. The sequence is that of Elongation factor G from Helicobacter pylori (strain Shi470).